Reading from the N-terminus, the 327-residue chain is Mitochondrial coenzyme A transporter SLC25A42 (327 aa).

Solcar repeat units lie at residues Lys34 to Leu120, Leu132 to Leu217, and Pro227 to Leu315. Transmembrane regions (helical) follow at residues Val36–Pro56, Leu92–Cys112, Leu138–Val158, Gly192–Phe209, Leu233–Val253, and Val296–Leu316.

Belongs to the mitochondrial carrier (TC 2.A.29) family.

The protein localises to the mitochondrion inner membrane. It carries out the reaction ADP(out) + CoA(in) = ADP(in) + CoA(out). It catalyses the reaction 3'-dephospho-CoA(in) + ADP(out) = 3'-dephospho-CoA(out) + ADP(in). The catalysed reaction is adenosine 3',5'-bisphosphate(in) + ADP(out) = adenosine 3',5'-bisphosphate(out) + ADP(in). The enzyme catalyses AMP(in) + ADP(out) = AMP(out) + ADP(in). It carries out the reaction dADP(in) + ADP(out) = dADP(out) + ADP(in). It catalyses the reaction ADP(in) + ATP(out) = ADP(out) + ATP(in). Its function is as follows. Mitochondrial carrier mediating the transport of coenzyme A (CoA) in mitochondria in exchange for intramitochondrial (deoxy)adenine nucleotides and adenosine 3',5'-diphosphate. This Xenopus laevis (African clawed frog) protein is Mitochondrial coenzyme A transporter SLC25A42 (slc25a42).